We begin with the raw amino-acid sequence, 304 residues long: Hairy/enhancer-of-split related with YRPW motif protein 1 (304 aa).

Residues 1–52 (MKRAHPDYSSSDSELDETVEVEKESADENGNLSSALGSMSPTTSSQILARKR) are disordered. The span at 28-47 (ENGNLSSALGSMSPTTSSQI) shows a compositional bias: polar residues. The interval 48–117 (LARKRRRGII…GGKGYFDAHA (70 aa)) is transcriptional repression and interaction with NCOR1 and SIN3A. The bHLH domain maps to 49-104 (ARKRRRGIIEKRRRDRINNSLSELRRLVPSAFEKQGSAKLEKAEILQMTVDHLKML). Positions 122–158 (YRSLGFRECLAEVARYLSIIEGLDASDPLRVRLVSHL) constitute an Orange domain. The segment at 191 to 234 (AHPLLLPQSGHGNTGTSASPTDPHHQGRLAAAHPEAPALRAPPS) is disordered. Residues 200 to 210 (GHGNTGTSASP) are compositionally biased toward polar residues. Positions 218-234 (RLAAAHPEAPALRAPPS) are enriched in low complexity.

Belongs to the HEY family. In terms of assembly, self-associates. Interacts with HES1 and HEYL. Interacts with HDAC1, NCOR1 and SIN3A. Interacts with GATA4 and GATA6. Interacts with CCDC89/BOIP.

The protein localises to the nucleus. Transcriptional repressor which binds preferentially to the canonical E box sequence 5'-CACGTG-3'. Downstream effector of Notch signaling required for cardiovascular development. Specifically required for the Notch-induced endocardial epithelial to mesenchymal transition, which is itself criticial for cardiac valve and septum development. May be required in conjunction with HEY2 to specify arterial cell fate or identity. Promotes maintenance of neuronal precursor cells and glial versus neuronal fate specification. Represses transcription by the cardiac transcriptional activators GATA4 and GATA6 and by the neuronal bHLH factors ASCL1/MASH1 and NEUROD4/MATH3. In Canis lupus familiaris (Dog), this protein is Hairy/enhancer-of-split related with YRPW motif protein 1 (HEY1).